Reading from the N-terminus, the 595-residue chain is Solute carrier family 13 member 1 (595 aa).

A run of 5 helical transmembrane segments spans residues 13–33 (FLFV…LHTK), 41–61 (LFVV…TALL), 77–97 (VASA…CLAT), 108–128 (IALK…LGFM), and 131–151 (TAFL…MPIA). N-linked (GlcNAc...) asparagine glycans are attached at residues Asn174 and Asn207. The next 8 membrane-spanning stretches (helical) occupy residues 239–259 (LTCL…ITGT), 290–310 (PAAL…FLGF), 348–368 (IVTL…DPGF), 381–401 (GFAT…LIPA), 464–484 (PLGS…VTSL), 491–511 (PATI…IHVN), 512–532 (PLYI…LPVA), and 554–574 (GLGV…TWIV). An N-linked (GlcNAc...) asparagine glycan is attached at Asn591.

This sequence belongs to the SLC13A/DASS transporter (TC 2.A.47) family. NADC subfamily. Highly expressed in kidney; not detectable in the other tissues tested.

It localises to the apical cell membrane. It catalyses the reaction sulfate(out) + 3 Na(+)(out) = sulfate(in) + 3 Na(+)(in). It carries out the reaction selenate(out) + 3 Na(+)(out) = selenate(in) + 3 Na(+)(in). The enzyme catalyses thiosulfate(out) + 3 Na(+)(out) = thiosulfate(in) + 3 Na(+)(in). With respect to regulation, inhibited by thiosulfate, selenate, molybdate, tungstate, citrate and succinate. Functionally, sodium:sulfate symporter that mediates sulfate reabsorption in the kidney and small intestine. Can also mediate the transport of selenate and thiosulfate. The polypeptide is Solute carrier family 13 member 1 (SLC13A1) (Homo sapiens (Human)).